The sequence spans 468 residues: Cysteine--tRNA ligase (468 aa).

C36 provides a ligand contact to Zn(2+). A 'HIGH' region motif is present at residues 38-48 (PTVYNRSHIGN). The Zn(2+) site is built by C216, H241, and E245. The short motif at 274–278 (KMSKS) is the 'KMSKS' region element. An ATP-binding site is contributed by K277.

This sequence belongs to the class-I aminoacyl-tRNA synthetase family. As to quaternary structure, monomer. It depends on Zn(2+) as a cofactor.

The protein localises to the cytoplasm. It catalyses the reaction tRNA(Cys) + L-cysteine + ATP = L-cysteinyl-tRNA(Cys) + AMP + diphosphate. This Parvibaculum lavamentivorans (strain DS-1 / DSM 13023 / NCIMB 13966) protein is Cysteine--tRNA ligase.